A 661-amino-acid polypeptide reads, in one-letter code: MNPDLRKERAAATFNPELITHILDGSPENTRRRREIENLILNDPDFQHEDYNFLTRSQRYEVAVKKSATMVKKMREFGIADPEEIMWFKKLHMVNFVEPVGLNYSMFIPTLLNQGTTAQQEKWMHPSQELQIIGTYAQTEMGHGTHLRGLETTATYDPKTQEFILNSPTVTSIKWWPGGLGKTSNHAIVLAQLITRGECYGLHAFVVPIREIGTHKPLPGITVGDIGPKFGYEEMDNGYLKMDNYRIPRENMLMKYAQVKPDGTYVKPLSNKLTYGTMVFVRSFLVGSAAQSLSKACTIAIRYSAVRRQSEIKRSEPEPQILDFQTQQYKLFPLLATAYAFHFLGRYIKETYMRINESIGQGDLSELPELHALTAGLKAFTTWTANAGIEECRMACGGHGYSHSSGIPNIYVTFTPACTFEGENTVMMLQTARFLMKIYDQVQSGKLVGGMVSYLNDLPSQRIQPQQVAVWPTLVDINSLDSLTEAYKLRAARLVEIAAKNLQAQVSHRKSKEVAWNLTSVDLVRASEAHCHYVTVKVFADKLPKIQDRAVQAVLRNLCLLYSLYGISQKGGDFLEGNIITGAQMSQVNSRILELLTVTRPNAVALVDAFDFKDVTLGSVLGRYDGNVYENLFEWAKKSPLNKTEVHESYYKHLKPLQSKL.

The residue at position 26 (S26) is a Phosphoserine. N6-acetyllysine is present on K65. An N6-succinyllysine mark is found at K89 and K90. Residue T139 coordinates FAD. N6-succinyllysine is present on K159. FAD is bound at residue G178. Position 216 is an N6-acetyllysine (K216). K241 is modified (N6-succinyllysine). K255, K267, and K272 each carry N6-acetyllysine. The residue at position 349 (K349) is an N6-succinyllysine. E421 serves as the catalytic Proton acceptor. Residues K437 and K446 each carry the N6-acetyllysine; alternate modification. An N6-succinyllysine; alternate mark is found at K437 and K446. K500 bears the N6-acetyllysine mark. K512 carries the post-translational modification N6-acetyllysine; alternate. At K512 the chain carries N6-succinyllysine; alternate. K542 is subject to N6-succinyllysine. N6-acetyllysine; alternate is present on K637. K637 carries the post-translational modification N6-succinyllysine; alternate. K643 is subject to N6-succinyllysine. S649 bears the Phosphoserine mark. K652 bears the N6-acetyllysine mark. K655 is subject to N6-succinyllysine. Positions 659–661 (SKL) match the Microbody targeting signal motif.

The protein belongs to the acyl-CoA oxidase family. Homodimer. Interacts with LONP2. FAD serves as cofactor. As to expression, highest levels of isoform 1 are found in liver and kidney while highest levels of isoform 2 are found in white adipose tissue. Isoform 1 is expressed at higher levels than isoform 2 in liver and kidney while isoform 2 is expressed at higher levels in brain, heart, lung, muscle, white adipose tissue and testis.

The protein resides in the peroxisome. The catalysed reaction is a 2,3-saturated acyl-CoA + O2 = a (2E)-enoyl-CoA + H2O2. It carries out the reaction hexadecanoyl-CoA + O2 = (2E)-hexadecenoyl-CoA + H2O2. It catalyses the reaction dodecanoyl-CoA + O2 = (2E)-dodecenoyl-CoA + H2O2. The enzyme catalyses octanoyl-CoA + O2 = (2E)-octenoyl-CoA + H2O2. The catalysed reaction is decanoyl-CoA + O2 = (2E)-decenoyl-CoA + H2O2. It carries out the reaction tetradecanoyl-CoA + O2 = (2E)-tetradecenoyl-CoA + H2O2. It catalyses the reaction hexadecanedioyl-CoA + O2 = (2E)-hexadecenedioyl-CoA + H2O2. The enzyme catalyses tetracosanoyl-CoA + O2 = (2E)-tetracosenoyl-CoA + H2O2. The catalysed reaction is glutaryl-CoA + O2 = (2E)-glutaconyl-CoA + H2O2. It carries out the reaction hexanoyl-CoA + O2 = (2E)-hexenoyl-CoA + H2O2. It catalyses the reaction octadecanoyl-CoA + O2 = (2E)-octadecenoyl-CoA + H2O2. The enzyme catalyses (5Z,8Z,11Z,14Z,17Z)-eicosapentaenoyl-CoA + O2 = (2E,5Z,8Z,11Z,14Z,17Z)-icosahexaenoyl-CoA + H2O2. The catalysed reaction is (6Z,9Z,12Z,15Z,18Z,21Z)-tetracosahexaenoyl-CoA + O2 = (2E,6Z,9Z,12Z,15Z,18Z,21Z)-tetracosaheptaenoyl-CoA + H2O2. The protein operates within lipid metabolism; peroxisomal fatty acid beta-oxidation. Functionally, involved in the initial and rate-limiting step of peroxisomal beta-oxidation of straight-chain saturated and unsaturated very-long-chain fatty acids. Catalyzes the desaturation of fatty acyl-CoAs such as palmitoyl-CoA (hexadecanoyl-CoA) to 2-trans-enoyl-CoAs ((2E)-enoyl-CoAs) such as (2E)-hexadecenoyl-CoA, and donates electrons directly to molecular oxygen (O(2)), thereby producing hydrogen peroxide (H(2)O(2)). Shows highest activity against medium-chain fatty acyl-CoAs. Shows optimum activity with a chain length of 10 carbons (decanoyl-CoA) in vitro. Its function is as follows. Is active against a much broader range of substrates and shows activity towards long-chain acyl-CoAs. This Mus musculus (Mouse) protein is Peroxisomal acyl-coenzyme A oxidase 1.